The sequence spans 1158 residues: cGMP-specific 3',5'-cyclic phosphodiesterase (1158 aa).

Disordered stretches follow at residues 1-137 (MTDV…SQHD) and 195-216 (SPTV…SIPE). A compositionally biased stretch (low complexity) spans 30-71 (ATTSAAASASSSQAKPLTNGAKKAATAAAAAGAEEGGASASN). Over residues 108-135 (GSTSKSSSIHTQTSQQERAGRPTSSASQ) the composition is skewed to polar residues. A compositionally biased stretch (low complexity) spans 202-215 (SPRSLSNSSASSIP). GAF domains lie at 242–394 (DIDV…GIGI) and 426–640 (NLEC…GLGI). The PDEase domain maps to 670-993 (SQDQTEKLTQ…RNWQDLAEKV (324 aa)). His-746 serves as the catalytic Proton donor. A divalent metal cation is bound by residues His-750, His-786, Asp-787, and Asp-897. Disordered regions lie at residues 1034–1065 (QSQQ…TGAL) and 1097–1158 (VSED…CALL). Basic and acidic residues predominate over residues 1041 to 1052 (GSEDSHTPEHQR). Low complexity predominate over residues 1114 to 1130 (AAGSMGRMSASSSTSSA). Over residues 1148–1158 (SKKRSKLCALL) the composition is skewed to basic residues. Cys-1155 carries the cysteine methyl ester modification. Cys-1155 is lipidated: S-farnesyl cysteine. Residues 1156-1158 (ALL) constitute a propeptide, removed in mature form.

It belongs to the cyclic nucleotide phosphodiesterase family. In terms of assembly, interacts with PrBP. It depends on a divalent metal cation as a cofactor.

Its subcellular location is the cell membrane. The catalysed reaction is 3',5'-cyclic GMP + H2O = GMP + H(+). In terms of biological role, has a role regulating cGMP transport in Malpighian tubule principal cells. The protein is cGMP-specific 3',5'-cyclic phosphodiesterase of Drosophila ananassae (Fruit fly).